The sequence spans 358 residues: BAG family molecular chaperone regulator 1 (358 aa).

Basic and acidic residues-rich tracts occupy residues methionine 1–glutamine 14, serine 26–arginine 39, and lysine 85–arginine 94. The tract at residues methionine 1–valine 113 is disordered. Tandem repeats lie at residues lysine 102–threonine 111, glutamate 114–isoleucine 119, glutamate 120–threonine 125, glutamate 126–alanine 131, glutamate 132–threonine 137, glutamate 144–threonine 149, and glutamate 150–proline 155. A 7 X 6 AA tandem repeat of E-E-X(4) region spans residues glutamate 114–glutamate 212. Residues leucine 157 to proline 237 form the Ubiquitin-like domain. Residues aspartate 185 to glycine 232 are interaction with HSPA8. Positions methionine 229–glutamate 358 are interaction with PPP1R15A. One can recognise a BAG domain in the interval histidine 259–glutamate 339.

In terms of assembly, homodimer. Forms a heteromeric complex with HSP70/HSC70. Binds to the ATPase domain of HSP/HSC70 chaperones. Interacts with NR3C1. Interacts with the N-terminal region of MAPRE2. Interacts with PPP1R15A. Interacts with BCL2 in an ATP-dependent manner. Interacts with SIAH1, SIAH2, HSPA8 (via NBD), HSPA1A (via NBD) and HSPA1B (via NBD). Interacts with ESR1; the interaction is promoted in the absence of estradiol (17-beta-estradiol/E2). In terms of processing, ubiquitinated; mediated by SIAH1 or SIAH2 and leading to its subsequent proteasomal degradation. In terms of tissue distribution, expressed in the CA1 region of the hippocampus (at protein level). Expressed in the uterus (at protein level).

It localises to the nucleus. Its subcellular location is the cytoplasm. Functionally, co-chaperone for HSP70 and HSC70 chaperone proteins. Acts as a nucleotide-exchange factor (NEF) promoting the release of ADP from the HSP70 and HSC70 proteins thereby triggering client/substrate protein release. Nucleotide release is mediated via its binding to the nucleotide-binding domain (NBD) of HSPA8/HSC70 where as the substrate release is mediated via its binding to the substrate-binding domain (SBD) of HSPA8/HSC70. Inhibits the pro-apoptotic function of PPP1R15A, and has anti-apoptotic activity. Markedly increases the anti-cell death function of BCL2 induced by various stimuli. Involved in the STUB1-mediated proteasomal degradation of ESR1 in response to age-related circulating estradiol (17-beta-estradiol/E2) decline, thereby promotes neuronal apoptosis in response to ischemic reperfusion injury. This is BAG family molecular chaperone regulator 1 (Bag1) from Rattus norvegicus (Rat).